The chain runs to 134 residues: Putative integral membrane protein YxzK (134 aa).

4 helical membrane passes run 3 to 23, 35 to 55, 58 to 78, and 89 to 109; these read VIRI…GEAI, IVGL…VSII, GAGF…TGVI, and LMLL…AGFA.

Its subcellular location is the cell membrane. This Bacillus subtilis (strain 168) protein is Putative integral membrane protein YxzK (yxzK).